A 309-amino-acid polypeptide reads, in one-letter code: Tyrosine recombinase XerD (309 aa).

In terms of domain architecture, Core-binding (CB) spans 3 to 88; the sequence is MRASLAIENF…ALRQFFRFLY (86 aa). The 194-residue stretch at 109–302 folds into the Tyr recombinase domain; that stretch reads PLPKIMSVEN…LEERLHKLVS (194 aa). Active-site residues include Arg158, Lys182, His254, Arg257, and His280. Catalysis depends on Tyr289, which acts as the O-(3'-phospho-DNA)-tyrosine intermediate.

Belongs to the 'phage' integrase family. XerD subfamily. As to quaternary structure, forms a cyclic heterotetrameric complex composed of two molecules of XerC and two molecules of XerD.

It is found in the cytoplasm. In terms of biological role, site-specific tyrosine recombinase, which acts by catalyzing the cutting and rejoining of the recombining DNA molecules. The XerC-XerD complex is essential to convert dimers of the bacterial chromosome into monomers to permit their segregation at cell division. It also contributes to the segregational stability of plasmids. The polypeptide is Tyrosine recombinase XerD (Brucella melitensis biotype 1 (strain ATCC 23456 / CCUG 17765 / NCTC 10094 / 16M)).